A 491-amino-acid polypeptide reads, in one-letter code: Serine/threonine-protein kinase 3/4 (491 aa).

The disordered stretch occupies residues 1-24; that stretch reads MEEVQRRQHPHPRRSLKKLSEDSL. Positions 7–17 are enriched in basic residues; the sequence is RQHPHPRRSLK. In terms of domain architecture, Protein kinase spans 32–283; the sequence is FDVLEKLGEG…ATQLLQHPFI (252 aa). ATP is bound by residues 38–46 and Lys61; that span reads LGEGSYGSV. The active-site Proton acceptor is the Asp151. A Phosphothreonine; by autocatalysis modification is found at Thr185. Positions 292 to 334 form a coiled coil; it reads LRDLITDMMEIKLKRQEEQQRDLDQDDEENSEEDDMDSGTMVR. Disordered stretches follow at residues 307–394 and 406–435; these read QEEQ…IQQS and EKENQANSHSNRNAQALQNSSDNWKVPQDG. Residues 315–328 are compositionally biased toward acidic residues; sequence DQDDEENSEEDDMD. Composition is skewed to polar residues over residues 363–373 and 410–428; these read TLDSQMGTMVI and QANSHSNRNAQALQNSSDN. In terms of domain architecture, SARAH spans 437-484; sequence FESLKSWSVEELQRRLASLDPTMEQEIEEIRQRYQAKRQPILDAIDAK. A coiled-coil region spans residues 442–475; the sequence is SWSVEELQRRLASLDPTMEQEIEEIRQRYQAKRQ.

The protein belongs to the protein kinase superfamily. STE Ser/Thr protein kinase family. STE20 subfamily. As to quaternary structure, homodimer; mediated via the coiled-coil region. It depends on Mg(2+) as a cofactor. Post-translationally, proteolytically cleaved by caspase-3 during apoptosis at Asp-328 resulting in a 37 kDa form. Proteolytic cleavage results in kinase activation and nuclear translocation of the truncated form (MST1/N).

The protein resides in the cytoplasm. The protein localises to the nucleus. The enzyme catalyses L-seryl-[protein] + ATP = O-phospho-L-seryl-[protein] + ADP + H(+). It carries out the reaction L-threonyl-[protein] + ATP = O-phospho-L-threonyl-[protein] + ADP + H(+). Inhibited by the C-terminal non-catalytic region. Activated by caspase-cleavage. Full activation also requires homodimerization and autophosphorylation of Thr-185. In terms of biological role, stress-activated, pro-apoptotic kinase which, following caspase-cleavage, enters the nucleus and induces chromatin condensation followed by internucleosomal DNA fragmentation. Key component of the Hippo signaling pathway which plays a pivotal role in organ size control and tumor suppression by restricting proliferation and promoting apoptosis. The core of this pathway is composed of a kinase cascade wherein stk3/mst2 and stk4/mst1, in complex with its regulatory protein sav1, phosphorylates and activates lats1/2 in complex with its regulatory protein mob1, which in turn phosphorylates and inactivates yap1 oncoprotein and wwtr1/taz. Phosphorylation of yap1 by lats2 inhibits its translocation into the nucleus to regulate cellular genes important for cell proliferation, cell death, and cell migration. Phosphorylates 'Ser-14' of histone H2B (H2BS14ph) during apoptosis. The protein is Serine/threonine-protein kinase 3/4 (STK4) of Squalus acanthias (Spiny dogfish).